The sequence spans 341 residues: HTH-type transcriptional repressor PurR (341 aa).

In terms of domain architecture, HTH lacI-type spans 2 to 56 (ATIKDVAKRANVSTTTVSHVINKTRFVAEETRNAVWAAIKELHYSPSAVARSLKV). Positions 4-23 (IKDVAKRANVSTTTVSHVIN) form a DNA-binding region, H-T-H motif. A DNA-binding region spans residues 48-56 (SAVARSLKV). The hypoxanthine site is built by tyrosine 73, arginine 190, threonine 192, phenylalanine 221, and aspartate 275.

Homodimer.

Its pathway is purine metabolism; purine nucleotide biosynthesis [regulation]. Is the main repressor of the genes involved in the de novo synthesis of purine nucleotides, regulating purB, purC, purEK, purF, purHD, purL, purMN and guaBA expression. PurR is allosterically activated to bind its cognate DNA by binding the purine corepressors, hypoxanthine or guanine, thereby effecting transcription repression. This Escherichia coli (strain UTI89 / UPEC) protein is HTH-type transcriptional repressor PurR.